A 317-amino-acid polypeptide reads, in one-letter code: Acetyl-coenzyme A carboxylase carboxyl transferase subunit alpha (317 aa).

A CoA carboxyltransferase C-terminal domain is found at 39–293 (RLQKKSNDLT…KAVLEKQLHE (255 aa)).

This sequence belongs to the AccA family. In terms of assembly, acetyl-CoA carboxylase is a heterohexamer composed of biotin carboxyl carrier protein (AccB), biotin carboxylase (AccC) and two subunits each of ACCase subunit alpha (AccA) and ACCase subunit beta (AccD).

It is found in the cytoplasm. The catalysed reaction is N(6)-carboxybiotinyl-L-lysyl-[protein] + acetyl-CoA = N(6)-biotinyl-L-lysyl-[protein] + malonyl-CoA. Its pathway is lipid metabolism; malonyl-CoA biosynthesis; malonyl-CoA from acetyl-CoA: step 1/1. Functionally, component of the acetyl coenzyme A carboxylase (ACC) complex. First, biotin carboxylase catalyzes the carboxylation of biotin on its carrier protein (BCCP) and then the CO(2) group is transferred by the carboxyltransferase to acetyl-CoA to form malonyl-CoA. In Neisseria gonorrhoeae (strain NCCP11945), this protein is Acetyl-coenzyme A carboxylase carboxyl transferase subunit alpha.